The chain runs to 239 residues: tRNA (guanine-N(7)-)-methyltransferase (239 aa).

Glu69, Glu94, Asp121, and Asp144 together coordinate S-adenosyl-L-methionine. The active site involves Asp144. Lys148 provides a ligand contact to substrate. Residues 150 to 155 form an interaction with RNA region; sequence RHNKRR. Substrate contacts are provided by residues Asp180 and 217 to 220; that span reads TKFE.

The protein belongs to the class I-like SAM-binding methyltransferase superfamily. TrmB family. As to quaternary structure, monomer.

The enzyme catalyses guanosine(46) in tRNA + S-adenosyl-L-methionine = N(7)-methylguanosine(46) in tRNA + S-adenosyl-L-homocysteine. The protein operates within tRNA modification; N(7)-methylguanine-tRNA biosynthesis. Functionally, catalyzes the formation of N(7)-methylguanine at position 46 (m7G46) in tRNA. In Salmonella typhi, this protein is tRNA (guanine-N(7)-)-methyltransferase.